Reading from the N-terminus, the 254-residue chain is MEAHDAHVNSEESENPGAAPYGNFINYYTFNPPENRLSLIPEALLQNIGFTSGDGERVLMLDVGCNSGDLSVALYKHLLNKEACTSDSPRQELYMLGFDLDQDLILRAQTSNPFPQNIQFIPLDITDDTESRAVLQAFLGKFGCSRFHLSTCFAVTMWVHLNHGDAAFLSLLSRLASHSEYLLLEAQPWKCYRSAARRLRKLGRSDFDHFKALKIRGDMAAHAREHLEKQCSMELVQCFGNTSWDRSLLLFRRQ.

A Bin3-type SAM domain is found at 34 to 254 (ENRLSLIPEA…DRSLLLFRRQ (221 aa)). Residues arginine 36, asparagine 66, aspartate 99, and 124–125 (DI) each bind S-adenosyl-L-methionine.

Belongs to the methyltransferase superfamily.

Its subcellular location is the cytoplasm. It catalyses the reaction a 5'-end 5'-phospho-ribonucleoside-RNA + S-adenosyl-L-methionine = a 5'-end (5'-methylphospho)-ribonucleoside-RNA + S-adenosyl-L-homocysteine. The catalysed reaction is a 5'-end 5'-phospho-ribonucleoside-RNA + 2 S-adenosyl-L-methionine = a 5'-end (5'-bismethylphospho)-ribonucleoside-RNA + 2 S-adenosyl-L-homocysteine. Its function is as follows. O-methyltransferase that specifically monomethylates 5'-monophosphate of cytoplasmic histidyl tRNA (tRNA(His)), acting as a capping enzyme by protecting tRNA(His) from cleavage by DICER1. Also able, with less efficiently, to methylate the 5' monophosphate of a subset of pre-miRNAs, acting as a negative regulator of miRNA processing. The 5' monophosphate of pre-miRNAs is recognized by DICER1 and is required for pre-miRNAs processing: methylation at this position reduces the processing of pre-miRNAs by DICER1. Was also reported to mediate dimethylation of pre-miR-145; however dimethylation cannot be reproduced by another group which observes a monomethylation of pre-miR-145. This chain is Pre-miRNA 5'-monophosphate methyltransferase (bcdin3d), found in Danio rerio (Zebrafish).